The chain runs to 432 residues: Putative D-alanyl-D-alanine carboxypeptidase (432 aa).

Residues 7-25 (ATVLLTFSLSAFAVEYPVL) form a helical; Signal-anchor membrane-spanning segment.

The protein belongs to the peptidase S12 family. YfeW subfamily.

The protein localises to the cell inner membrane. The enzyme catalyses Preferential cleavage: (Ac)2-L-Lys-D-Ala-|-D-Ala. Also transpeptidation of peptidyl-alanyl moieties that are N-acyl substituents of D-alanine.. This chain is Putative D-alanyl-D-alanine carboxypeptidase, found in Salmonella typhimurium (strain LT2 / SGSC1412 / ATCC 700720).